Reading from the N-terminus, the 124-residue chain is Small ribosomal subunit protein uS12 (124 aa).

A disordered region spans residues 1-22 (MATINQLVRKPRKRKVAKSDVP). Asp89 carries the post-translational modification 3-methylthioaspartic acid. Residues 101–124 (TLDTQGVQNRKQGRSKYGAKRPKS) form a disordered region. A compositionally biased stretch (basic residues) spans 111 to 124 (KQGRSKYGAKRPKS).

This sequence belongs to the universal ribosomal protein uS12 family. In terms of assembly, part of the 30S ribosomal subunit. Contacts proteins S8 and S17. May interact with IF1 in the 30S initiation complex.

With S4 and S5 plays an important role in translational accuracy. In terms of biological role, interacts with and stabilizes bases of the 16S rRNA that are involved in tRNA selection in the A site and with the mRNA backbone. Located at the interface of the 30S and 50S subunits, it traverses the body of the 30S subunit contacting proteins on the other side and probably holding the rRNA structure together. The combined cluster of proteins S8, S12 and S17 appears to hold together the shoulder and platform of the 30S subunit. The polypeptide is Small ribosomal subunit protein uS12 (Marinobacter nauticus (strain ATCC 700491 / DSM 11845 / VT8) (Marinobacter aquaeolei)).